The sequence spans 413 residues: Glycosyl hydrolase family 109 protein 2 (413 aa).

Residues 26–27 (NR), aspartate 48, 96–99 (WLTH), 116–117 (EV), and asparagine 145 contribute to the NAD(+) site. Substrate is bound at residue tyrosine 174. NAD(+) is bound by residues 191-195 (YHNHW) and tyrosine 208. Residues 208–211 (YPTH) and tyrosine 290 contribute to the substrate site.

It belongs to the Gfo/Idh/MocA family. Glycosyl hydrolase 109 subfamily. The cofactor is NAD(+).

Functionally, glycosidase. This is Glycosyl hydrolase family 109 protein 2 from Phocaeicola vulgatus (strain ATCC 8482 / DSM 1447 / JCM 5826 / CCUG 4940 / NBRC 14291 / NCTC 11154) (Bacteroides vulgatus).